The chain runs to 1481 residues: MLHINMHIIDIGINTKMKPTPRHIHMIVKSNYTNMELERNTFSSNMNVMKDELNEMRRKLELHEAEKRAEITKGSQKKSNSSSSENLEKDNAIKSLRSQLNSVKVVNEQLKFNIRELQNSHSITIKKLEQIHRDNLTSVEISFANNIEKYKSRIDELTRVNGELTKINATLSVAGPSASPLRKSGDDQRSYNRYTTNDINKLNRDRNQWLRELNIIRSENGELKRQIDSLNKLLEKSRNEIKQIRSKYNSLETQKDYENGDLFAGMEENLDAAVSRCKELFDEKLRLENDIQRLMEEGAMNRDKIHRQNYDIEKLKNTIQENLDKQFDLINNGYRYDDDDDDNCSGGVAVLKSRITNLESQIIELSADIEYRDGNIASLEKERDDLKQKYNNEKRNSRNASDGVAKLKINMKKSELERDKFREKCLKSDNIIMELKRQLEINNVDLERIRDERNEYQEKVKFLDAEILTNRNKFEEQTNALNNMLRQYSRRSINNSNPSLNDTRKLHMQLQLQIETLNNQLDTVKSERKIVLEEVIRLNHQIDTLKQIYQCSMQNTTILCRNYVKNSDSKLEYLLNSHRDELKEYQDMLNISEAKLIQSEKQYQQLMADNSSAATEMRALEKRLASEMNRYQEELSQKDAIISQLKSVIEPMQREIENLNTSRRNLQYNINNTTNDSELTTSSSSSNNMLLYDKIKQLENELNRYKESERAWRNERDLLVSKMRNTVGANDLSLQSRIRTLEMDNKNLRENLQANNSTIANERANYIQQLDKLNEEIDMNNREMGKLQVEIASLNNQLNASNVLNESQIEKINRQNEELNSNLTEINALRDELNKRESDILVANRELNVLRRRVEKYKSSTTPSSEEKLTTPKRMQYVKTIKTLRKEIADNKRQIKNLIRDRSQNDDHINQLRVNDQLLNVINSLKNQIRESNGEIKMYERKLYESNRQNVKLNDNMKRVVGENESLNNRIKSIYNNYDKQIAEIGEEVAKKNELIKILTLSVENIESNNEDVRGDGVNTTNFFKNLLVTTIRERNDLDRKVQELQSEVFINKSRLSECQATMVQLNNDLTMRVEENKNLERVIVELRERISNNESKLQELQLEDGGRMTRIPEYDDENIRNYRLRLQQAQNIIKNNQNELSRLKNVDNDLRELRKKLLSQSGKEDNDNHISQELQNAMTQLDYSKNIIEEHVEQIQQLTAKNEDTERALNELQGDMRALEVDRSNILTENASLNDELTSMKDDIDIMQRKFTQLQNDYYSTSRELELEKEERFKCNATNVEIKQELRTLKSELLRLQKQCGGIKKCATKLQESIISGDEKLSSTVSSSSSSSPKTTTKRKRNNDDNTNDDYNNRKKVHLSKSTSRSPKRNLKRKEINNDNDASTSKNRRSSSSRTTITPPIPRSRALRLSASSIEDLKIDSKRQRLLNAGIVQDTELTDEEYDENFDRNLLSDDDTEEDIMRKRILSNPKYEFLNNTYNG.

2 disordered regions span residues 65–88 (AEKRAEITKGSQKKSNSSSSENLE) and 1319–1403 (DEKL…PPIP). 3 stretches are compositionally biased toward low complexity: residues 73–84 (KGSQKKSNSSSS), 1323–1336 (SSTVSSSSSSSPKT), and 1393–1403 (SSRTTITPPIP).

The protein resides in the virion. This Noctuidae (owlet moths) protein is Structural protein ORF147.